The chain runs to 84 residues: Putative ribosomal RNA large subunit methyltransferase H 2 (84 aa).

Residues G33 and 52-57 (FSKMTF) each bind S-adenosyl-L-methionine.

This sequence belongs to the RNA methyltransferase RlmH family. Homodimer.

It localises to the cytoplasm. The enzyme catalyses pseudouridine(1915) in 23S rRNA + S-adenosyl-L-methionine = N(3)-methylpseudouridine(1915) in 23S rRNA + S-adenosyl-L-homocysteine + H(+). In terms of biological role, specifically methylates the pseudouridine at position 1915 (m3Psi1915) in 23S rRNA. This Clostridium perfringens (strain SM101 / Type A) protein is Putative ribosomal RNA large subunit methyltransferase H 2 (rlmH2).